A 372-amino-acid polypeptide reads, in one-letter code: MFNITSQVSALNATLAQGNSCLDAEWWSWLNTIQAPFLWVLFVLAVLENIFVLSVFFLHKSSCTVAEIYLGNLAVADLILAFGLPFWAITIANNFDWLFGEVLCRMVNTMIQMNMYSSICFLMLVSIDRYLALVKTMSMGRMRGVRWAKLYSLVIWGCALLLSSPMLVFRTMKDYRDEGHNVTACLIIYPSLTWQVFTNVLLNLVGFLLPLSIITFCTVQIMQVLRNNEMQKFKEIQTERRATVLVLAVLLLFVVCWLPFQIGTFLDTLRLLGFLPGCWEHVIDLITQISSYLAYSNSCLNPLVYVIVGKRFRKKSREVYHGLCRSGGCVSEPAQSENSMGTLRTSISVDRQIHKLQDWARSSSEGTPPGLL.

The Extracellular portion of the chain corresponds to 1 to 34 (MFNITSQVSALNATLAQGNSCLDAEWWSWLNTIQ). N-linked (GlcNAc...) asparagine glycans are attached at residues N3 and N12. A helical transmembrane segment spans residues 35–58 (APFLWVLFVLAVLENIFVLSVFFL). Residues 59 to 67 (HKSSCTVAE) are Cytoplasmic-facing. The helical transmembrane segment at 68-92 (IYLGNLAVADLILAFGLPFWAITIA) threads the bilayer. Residues 93–105 (NNFDWLFGEVLCR) are Extracellular-facing. A disulfide bond links C104 and C185. The chain crosses the membrane as a helical span at residues 106–127 (MVNTMIQMNMYSSICFLMLVSI). At 128-149 (DRYLALVKTMSMGRMRGVRWAK) the chain is on the cytoplasmic side. At Y130 the chain carries Phosphotyrosine. Residues 150-172 (LYSLVIWGCALLLSSPMLVFRTM) form a helical membrane-spanning segment. Residues 173 to 195 (KDYRDEGHNVTACLIIYPSLTWQ) are Extracellular-facing. The N-linked (GlcNAc...) asparagine glycan is linked to N181. A helical membrane pass occupies residues 196–222 (VFTNVLLNLVGFLLPLSIITFCTVQIM). Over 223 to 241 (QVLRNNEMQKFKEIQTERR) the chain is Cytoplasmic. Residues 242 to 266 (ATVLVLAVLLLFVVCWLPFQIGTFL) form a helical membrane-spanning segment. Topologically, residues 267-284 (DTLRLLGFLPGCWEHVID) are extracellular. A helical transmembrane segment spans residues 285-308 (LITQISSYLAYSNSCLNPLVYVIV). Over 309–364 (GKRFRKKSREVYHGLCRSGGCVSEPAQSENSMGTLRTSISVDRQIHKLQDWARSSS) the chain is Cytoplasmic. Y320 bears the Phosphotyrosine mark. The S-palmitoyl cysteine moiety is linked to residue C324. S339 is subject to Phosphoserine. T342 carries the post-translational modification Phosphothreonine. Phosphoserine; by GRK6 occurs at positions 346 and 348.

This sequence belongs to the G-protein coupled receptor 1 family. Bradykinin receptor subfamily. BDKRB2 sub-subfamily. Forms a complex with PECAM1 and GNAQ. Interacts with PECAM1.

It localises to the cell membrane. In terms of biological role, receptor for bradykinin. It is associated with G proteins that activate a phosphatidylinositol-calcium second messenger system. In Cavia porcellus (Guinea pig), this protein is B2 bradykinin receptor (BDKRB2).